Reading from the N-terminus, the 517-residue chain is GMP synthase [glutamine-hydrolyzing] (517 aa).

The Glutamine amidotransferase type-1 domain occupies 9-199; it reads RILILDFGSQ…VLNVCGCEGL (191 aa). Catalysis depends on cysteine 86, which acts as the Nucleophile. Catalysis depends on residues histidine 173 and glutamate 175. Positions 200-392 constitute a GMPS ATP-PPase domain; that stretch reads WTSASIIEDA…LGLPYNMLYR (193 aa). 227-233 is a binding site for ATP; that stretch reads SGGVDSS.

As to quaternary structure, homodimer.

It catalyses the reaction XMP + L-glutamine + ATP + H2O = GMP + L-glutamate + AMP + diphosphate + 2 H(+). Its pathway is purine metabolism; GMP biosynthesis; GMP from XMP (L-Gln route): step 1/1. In terms of biological role, catalyzes the synthesis of GMP from XMP. The chain is GMP synthase [glutamine-hydrolyzing] from Aliivibrio fischeri (strain MJ11) (Vibrio fischeri).